A 111-amino-acid polypeptide reads, in one-letter code: Resistin-like gamma (111 aa).

Residues 1–23 (MKTAICSLLICIFLLQLMVPVNT) form the signal peptide. 5 disulfides stabilise this stretch: Cys55–Cys108, Cys67–Cys107, Cys76–Cys93, Cys78–Cys95, and Cys82–Cys97.

The protein belongs to the resistin/FIZZ family. In terms of assembly, homodimer. Heterodimer with RETNLB. In terms of tissue distribution, highly expressed in bone marrow, spleen and white blood cells. Also detected at low levels in thymus, lung, trachea, white adipose tissue, nasal respiratory epithelium, colon, small intestine, kidney, liver, and heart.

The protein localises to the secreted. Functionally, probable hormone. Promotes chemotaxis in myeloid cells. The sequence is that of Resistin-like gamma from Rattus norvegicus (Rat).